Here is a 267-residue protein sequence, read N- to C-terminus: O-methyltransferase (267 aa).

S-adenosyl-L-methionine-binding residues include Q100 and H145.

It belongs to the methyltransferase superfamily.

The protein operates within antifungal biosynthesis. Its function is as follows. O-methyltransferase; part of the gene cluster that mediates the biosynthesis of the tetrahydropyranyl antifungal agent lanomycin that acts as an inhibitor of CYP51 and blocks the ergosterol biosynthesis. The biosynthesis probably begins with the formation of an hexaketide, followed by methionine mediated alkylation of C-2 and C-6, and methylation of the reduced C-3 oxygen, pyran forming reductive ring closure, oxygenation of C-4, beta-keto reduction, enoyl reduction and dehydration of the remaining oxygens, and finally, acylation with glycine to complete the biosynthesis. This Pyrenophora dematioidea (Helminthosporium dematioideum) protein is O-methyltransferase.